We begin with the raw amino-acid sequence, 1400 residues long: Tensin-2 (1400 aa).

Residues 31-79 (PHSFREKVFRKKTPVCAVCKVTIDGTGVSCRVCKVATHRKCEAKVTSSC) form a Phorbol-ester/DAG-type zinc finger. Position 91 is a phosphothreonine (threonine 91). 2 positions are modified to phosphoserine: serine 118 and serine 120. The 173-residue stretch at 122 to 294 (DPLMERRWDL…SYFSGLLSGS (173 aa)) folds into the Phosphatase tensin-type domain. Catalysis depends on cysteine 231, which acts as the Phosphocysteine intermediate. Positions 299–425 (SSPLFLHYVF…ASVEFVFSSS (127 aa)) constitute a C2 tensin-type domain. Residues 425–444 (SPEKVKGNTPRNDPSVSVDY) form a disordered region. Polar residues predominate over residues 433-444 (TPRNDPSVSVDY). Position 455 is a phosphoserine (serine 455). At tyrosine 456 the chain carries Phosphotyrosine. At serine 466 the chain carries Phosphoserine. A Phosphothreonine modification is found at threonine 474. Serine 481 carries the post-translational modification Phosphoserine. Tyrosine 483 carries the post-translational modification Phosphotyrosine. Residues 488–536 (RVPRQTPPAPSPELPPPPMLSVSSDSGHSSTLTTEHTAESPGRPPPTAA) form a disordered region. Residues 492–506 (QTPPAPSPELPPPPM) show a composition bias toward pro residues. Arginine 555 bears the Omega-N-methylarginine mark. The segment at 809–1114 (CGSPSEGRGY…DVTQPPEHPL (306 aa)) is disordered. 5 positions are modified to phosphoserine: serine 820, serine 825, serine 830, serine 832, and serine 835. Polar residues-rich tracts occupy residues 898–917 (CSAS…SSPV) and 929–940 (TRSPSLAPTQRL). Position 909 is a phosphothreonine (threonine 909). Phosphoserine occurs at positions 931, 941, and 972. A Phosphothreonine modification is found at threonine 977. Phosphoserine occurs at positions 991 and 1003. Positions 1046 to 1056 (PEPPQSSPTPA) are enriched in pro residues. Residues 1082-1098 (SGQQPSPPARSTNQHVT) are compositionally biased toward polar residues. Residue serine 1087 is modified to Phosphoserine. The SH2 domain maps to 1131 to 1238 (WYKPHLSRDQ…SLPCCLRIPS (108 aa)). Threonine 1173 carries the post-translational modification Phosphothreonine. The residue at position 1238 (serine 1238) is a Phosphoserine. The region spanning 1266–1399 (ACSVLYLTSV…FITKVLLGQR (134 aa)) is the PTB domain.

The protein belongs to the PTEN phosphatase protein family. Interacts with AXL. Interacts with SYK; leading to its phosphorylation. Interacts with SQSTM1 (via PB1 domain); the interaction leads to sequestration of TNS2 in cytoplasmic aggregates with SQSTM1 and promotes TNS2 ubiquitination and proteasomal degradation. Ubiquitinated following sequestration in cytoplasmic aggregates with SQSTM1, leading to proteasomal degradation. In terms of tissue distribution, in the adult kidney, expressed mainly in glomeruli (at protein level). In the newborn kidney, localizes on the basal surface of podocytes along the glomerular basement membrane and not in endothelial cells. Low expression levels in anabolic skeletal muscles.

The protein resides in the cell junction. Its subcellular location is the focal adhesion. It is found in the cell membrane. It localises to the cytoplasm. The catalysed reaction is O-phospho-L-tyrosyl-[protein] + H2O = L-tyrosyl-[protein] + phosphate. Its function is as follows. Tyrosine-protein phosphatase which regulates cell motility, proliferation and muscle-response to insulin. Phosphatase activity is mediated by binding to phosphatidylinositol-3,4,5-triphosphate (PtdIns(3,4,5)P3) via the SH2 domain. In muscles and under catabolic conditions, dephosphorylates IRS1 leading to its degradation and muscle atrophy. Negatively regulates PI3K-AKT pathway activation. Dephosphorylates nephrin NPHS1 in podocytes which affects mTORC1 complex activity. Under normal glucose conditions, NPHS1 outcompetes IRS1 for binding to phosphatidylinositol 3-kinase (PI3K) which balances mTORC1 activity but high glucose conditions lead to up-regulation of TNS2, increased NPHS1 dephosphorylation and activation of mTORC1, contributing to podocyte hypertrophy and proteinuria. Required for correct podocyte morphology, podocyte-glomerular basement membrane interaction and integrity of the glomerular filtration barrier. Enhances RHOA activation in the presence of DLC1. Plays a role in promoting DLC1-dependent remodeling of the extracellular matrix. The protein is Tensin-2 (Tns2) of Mus musculus (Mouse).